We begin with the raw amino-acid sequence, 867 residues long: Elongation factor 2 (867 aa).

The tr-type G domain occupies 17–368; sequence HNIRNLSVVA…MIVLHLPSPV (352 aa). Position 26–33 (26–33) interacts with GTP; that stretch reads AHVDHGKS. Threonine 57 and threonine 59 each carry phosphothreonine. Residues 176–179 and 231–233 each bind GTP; these read NKLD and SGL. At histidine 723 the chain carries Diphthamide.

The protein belongs to the TRAFAC class translation factor GTPase superfamily. Classic translation factor GTPase family. EF-G/EF-2 subfamily. In terms of processing, phosphorylation by EF-2 kinase completely inactivates EF-2.

The protein resides in the cytoplasm. The catalysed reaction is GTP + H2O = GDP + phosphate + H(+). In terms of biological role, catalyzes the GTP-dependent ribosomal translocation step during translation elongation. During this step, the ribosome changes from the pre-translocational (PRE) to the post-translocational (POST) state as the newly formed A-site-bound peptidyl-tRNA and P-site-bound deacylated tRNA move to the P and E sites, respectively. Catalyzes the coordinated movement of the two tRNA molecules, the mRNA and conformational changes in the ribosome. The sequence is that of Elongation factor 2 from Blastocystis hominis.